We begin with the raw amino-acid sequence, 174 residues long: MAQLENNSTLLVRENELKGLVSNWLIEMKLMHRPLGFDYQGVETLEVKAQNLTSVAIALYAYGFNYLRSQCAYDVSPGGDLASVYHLTKVDDNADQPQEVCIKVFVPRTKPIIPSVFWIWKTADFQERESYDMFGIYYEGHPHLKRILMPEHWIGWPLRKDYITPDFYELQDAY.

It belongs to the complex I 30 kDa subunit family. As to quaternary structure, NDH is composed of at least 16 different subunits, 5 of which are encoded in the nucleus.

It is found in the plastid. The protein localises to the chloroplast thylakoid membrane. The enzyme catalyses a plastoquinone + NADH + (n+1) H(+)(in) = a plastoquinol + NAD(+) + n H(+)(out). It catalyses the reaction a plastoquinone + NADPH + (n+1) H(+)(in) = a plastoquinol + NADP(+) + n H(+)(out). Its function is as follows. NDH shuttles electrons from NAD(P)H:plastoquinone, via FMN and iron-sulfur (Fe-S) centers, to quinones in the photosynthetic chain and possibly in a chloroplast respiratory chain. The immediate electron acceptor for the enzyme in this species is believed to be plastoquinone. Couples the redox reaction to proton translocation, and thus conserves the redox energy in a proton gradient. This Mesostigma viride (Green alga) protein is NAD(P)H-quinone oxidoreductase subunit J, chloroplastic.